The sequence spans 1059 residues: Disks large-associated protein 2 (1059 aa).

2 disordered regions span residues Gly31–Ile56 and Thr244–Thr311. Over residues Thr244–Lys261 the composition is skewed to polar residues. Residues Ser262–Gln271 show a composition bias toward basic and acidic residues. Residues Ser272–Glu285 show a composition bias toward basic residues. Phosphoserine occurs at positions 302, 308, 390, and 456. 2 disordered regions span residues Gly446–Arg466 and Val632–Asp669. Residues Val632–Tyr645 show a composition bias toward polar residues. Residues Ser667, Ser670, Ser673, and Ser720 each carry the phosphoserine modification. A disordered region spans residues Val723 to His756. Thr743 carries the phosphothreonine modification. Residue Ser745 is modified to Phosphoserine. The segment covering Thr747 to His756 has biased composition (basic and acidic residues). Phosphoserine occurs at positions 776, 811, 983, and 1012. The interval Glu985–Arg1024 is disordered. Basic and acidic residues predominate over residues Ile1007–Arg1024.

This sequence belongs to the SAPAP family. Interacts with DLG4/PSD-95. Expressed in various brain areas.

The protein resides in the cell membrane. The protein localises to the postsynaptic density. Its subcellular location is the synapse. In terms of biological role, may play a role in the molecular organization of synapses and neuronal cell signaling. Could be an adapter protein linking ion channel to the subsynaptic cytoskeleton. May induce enrichment of PSD-95/SAP90 at the plasma membrane. The sequence is that of Disks large-associated protein 2 from Rattus norvegicus (Rat).